We begin with the raw amino-acid sequence, 275 residues long: Lycopene elongase/hydratase (275 aa).

9 consecutive transmembrane segments (helical) span residues 13-33 (FWLY…TTVG), 38-58 (APAV…LYGI), 84-104 (AAVA…AAPL), 107-127 (EAWP…APPL), 134-154 (VLDS…YAGV), 160-180 (PLLA…FSAI), 203-223 (ALAY…LVDV), 225-245 (FGLL…LQVA), and 253-273 (YPAV…WGVV).

It belongs to the UbiA prenyltransferase family.

The protein resides in the cell membrane. The catalysed reaction is all-trans-lycopene + dimethylallyl diphosphate + H2O = dihydroisopentenyldehydrorhodopin + diphosphate. The enzyme catalyses isopentenyldehydrorhodopin + dimethylallyl diphosphate + H2O = dihydrobisanhydrobacterioruberin + diphosphate. It participates in carotenoid biosynthesis. Inhibited by bacterioopsin. Involved in the biosynthesis of the acyclic C50 carotenoid bacterioruberin (BR). Acts as a bifunctional elongase/hydratase that catalyzes the elongation of lycopene by attaching a C(5) isoprene unit at C-2, as well as the hydroxylation of the previous end of the molecule. The enzyme acts at both ends of the substrate, and catalyzes the conversion of lycopene to the C(45) intermediate dihydroisopentenyldehydrorhodopin (DH-IDR) and the conversion of isopentenyldehydrorhodopin (IDR) to the C(50) carotenoid dihydrobisanhydrobacterioruberin (DH-BABR). Can also catalyze the conversion of lycopene to tetrahydrobisanhydrobacterioruberin (TH-BABR). This is Lycopene elongase/hydratase from Halobacterium salinarum (strain ATCC 700922 / JCM 11081 / NRC-1) (Halobacterium halobium).